We begin with the raw amino-acid sequence, 731 residues long: Ubiquitin carboxyl-terminal hydrolase 17 (731 aa).

Positions 57, 60, 68, 71, 77, 81, 90, and 94 each coordinate Zn(2+). Residues Cys57–Cys94 form an MYND-type zinc finger. Disordered regions lie at residues Tyr171–Asn219 and Leu262–Lys281. Polar residues-rich tracts occupy residues Gly207–Asn219 and Lys265–Lys281. A USP domain is found at Phe329–Asp633. The Nucleophile role is filled by Cys338. The Proton acceptor role is filled by His592. The interval Pro637 to Ser702 is disordered. Low complexity predominate over residues Asp677–Ser701.

The protein belongs to the peptidase C19 family.

The catalysed reaction is Thiol-dependent hydrolysis of ester, thioester, amide, peptide and isopeptide bonds formed by the C-terminal Gly of ubiquitin (a 76-residue protein attached to proteins as an intracellular targeting signal).. Functionally, recognizes and hydrolyzes the peptide bond at the C-terminal Gly of ubiquitin. Involved in the processing of poly-ubiquitin precursors as well as that of ubiquitinated proteins. In Arabidopsis thaliana (Mouse-ear cress), this protein is Ubiquitin carboxyl-terminal hydrolase 17 (UBP17).